Here is a 277-residue protein sequence, read N- to C-terminus: Digeranylgeranylglyceryl phosphate synthase (277 aa).

Helical transmembrane passes span 16–36, 84–104, 107–127, 146–166, 200–220, 221–241, and 257–277; these read ILAGIVGILGALVAYEGIPDI, ALYYALLQYAIGSILAYFLNI, FVFATIAYFLTFLYGWKLKPL, GAIGVGRIGLAGYLAICAFLV, AIIAAIFGFLTVIASFLPVKV, GIGLGYAPIIIVDIIIIKASI, and LKIATFVAVISFLAGALTKGV.

This sequence belongs to the UbiA prenyltransferase family. DGGGP synthase subfamily. It depends on Mg(2+) as a cofactor.

The protein resides in the cell membrane. The catalysed reaction is sn-3-O-(geranylgeranyl)glycerol 1-phosphate + (2E,6E,10E)-geranylgeranyl diphosphate = 2,3-bis-O-(geranylgeranyl)-sn-glycerol 1-phosphate + diphosphate. The protein operates within membrane lipid metabolism; glycerophospholipid metabolism. Functionally, prenyltransferase that catalyzes the transfer of the geranylgeranyl moiety of geranylgeranyl diphosphate (GGPP) to the C2 hydroxyl of (S)-3-O-geranylgeranylglyceryl phosphate (GGGP). This reaction is the second ether-bond-formation step in the biosynthesis of archaeal membrane lipids. In Pyrococcus furiosus (strain ATCC 43587 / DSM 3638 / JCM 8422 / Vc1), this protein is Digeranylgeranylglyceryl phosphate synthase.